The following is a 572-amino-acid chain: Probable inactive glycosyltransferase 25 family member 3 (572 aa).

4 N-linked (GlcNAc...) asparagine glycosylation sites follow: Asn-52, Asn-130, Asn-214, and Asn-337. The Prevents secretion from ER motif lies at 569–572; the sequence is RDEL.

Belongs to the glycosyltransferase 25 family.

It localises to the endoplasmic reticulum lumen. Functionally, probable cell adhesion protein involved in leukocyte transmigration across the blood-brain barrier. Does not express any beta-galactosyltransferase activity in vitro. The protein is Probable inactive glycosyltransferase 25 family member 3 (Cercam) of Rattus norvegicus (Rat).